We begin with the raw amino-acid sequence, 348 residues long: UDP-N-acetylglucosamine--N-acetylmuramyl-(pentapeptide) pyrophosphoryl-undecaprenol N-acetylglucosamine transferase (348 aa).

UDP-N-acetyl-alpha-D-glucosamine contacts are provided by residues 11–13, Asn120, Arg161, Ser187, and Gln281; that span reads TGG.

This sequence belongs to the glycosyltransferase 28 family. MurG subfamily.

It localises to the cell inner membrane. The enzyme catalyses di-trans,octa-cis-undecaprenyl diphospho-N-acetyl-alpha-D-muramoyl-L-alanyl-D-glutamyl-meso-2,6-diaminopimeloyl-D-alanyl-D-alanine + UDP-N-acetyl-alpha-D-glucosamine = di-trans,octa-cis-undecaprenyl diphospho-[N-acetyl-alpha-D-glucosaminyl-(1-&gt;4)]-N-acetyl-alpha-D-muramoyl-L-alanyl-D-glutamyl-meso-2,6-diaminopimeloyl-D-alanyl-D-alanine + UDP + H(+). The protein operates within cell wall biogenesis; peptidoglycan biosynthesis. Its function is as follows. Cell wall formation. Catalyzes the transfer of a GlcNAc subunit on undecaprenyl-pyrophosphoryl-MurNAc-pentapeptide (lipid intermediate I) to form undecaprenyl-pyrophosphoryl-MurNAc-(pentapeptide)GlcNAc (lipid intermediate II). The polypeptide is UDP-N-acetylglucosamine--N-acetylmuramyl-(pentapeptide) pyrophosphoryl-undecaprenol N-acetylglucosamine transferase (Crocosphaera subtropica (strain ATCC 51142 / BH68) (Cyanothece sp. (strain ATCC 51142))).